Here is a 137-residue protein sequence, read N- to C-terminus: uncharacterized protein (137 aa).

A signal peptide spans 1 to 19 (MVAFYGIFLFGTVYLFGLA).

This is an uncharacterized protein from Acanthamoeba polyphaga (Amoeba).